The sequence spans 196 residues: Large ribosomal subunit protein bL9c (196 aa).

The N-terminal 41 residues, 1–41 (MASTTSTLSLSWSNSFHSFAGAISEPQKSPENCRVMLPIVA), are a transit peptide targeting the chloroplast.

Component of the chloroplast large ribosomal subunit (LSU). Mature 70S chloroplast ribosomes of higher plants consist of a small (30S) and a large (50S) subunit. The 30S small subunit contains 1 molecule of ribosomal RNA (16S rRNA) and 24 different proteins. The 50S large subunit contains 3 rRNA molecules (23S, 5S and 4.5S rRNA) and 33 different proteins.

The protein localises to the plastid. The protein resides in the chloroplast. Functionally, component of the chloroplast ribosome (chloro-ribosome), a dedicated translation machinery responsible for the synthesis of chloroplast genome-encoded proteins, including proteins of the transcription and translation machinery and components of the photosynthetic apparatus. The protein is Large ribosomal subunit protein bL9c (RPL9) of Spinacia oleracea (Spinach).